Here is a 328-residue protein sequence, read N- to C-terminus: uncharacterized protein (328 aa).

The SIS domain occupies leucine 37–isoleucine 179. Glycine 52–glycine 57 provides a ligand contact to ATP. 2 CBS domains span residues leucine 205–isoleucine 264 and methionine 273–leucine 328.

The protein belongs to the SIS family. GutQ/KpsF subfamily.

This is an uncharacterized protein from Chlamydia muridarum (strain MoPn / Nigg).